A 28-amino-acid chain; its full sequence is RQLNPSSQELQSPQQSYLQQPYPQNPYL.

The segment at 1-28 is disordered; the sequence is RQLNPSSQELQSPQQSYLQQPYPQNPYL.

In terms of tissue distribution, developing endosperm.

Functionally, sulfur-poor seed storage protein. The chain is C-hordein from Hordeum vulgare subsp. spontaneum (Wild barley).